The following is a 568-amino-acid chain: Probable asparagine--tRNA ligase, cytoplasmic (568 aa).

Belongs to the class-II aminoacyl-tRNA synthetase family.

Its subcellular location is the cytoplasm. The catalysed reaction is tRNA(Asn) + L-asparagine + ATP = L-asparaginyl-tRNA(Asn) + AMP + diphosphate + H(+). In terms of biological role, cytosolic asparaginyl-tRNA synthetase which catalyzes the specific attachment of asparagine to its cognate tRNA. The chain is Probable asparagine--tRNA ligase, cytoplasmic (nrs1) from Schizosaccharomyces pombe (strain 972 / ATCC 24843) (Fission yeast).